A 123-amino-acid polypeptide reads, in one-letter code: Small ribosomal subunit protein uS12 (123 aa).

The tract at residues 1–21 is disordered; the sequence is MPTIEQLVRKGRQAKPKKSKT. Over residues 9–20 the composition is skewed to basic residues; that stretch reads RKGRQAKPKKSK. Residue Asp-89 is modified to 3-methylthioaspartic acid.

The protein belongs to the universal ribosomal protein uS12 family. Part of the 30S ribosomal subunit. Contacts proteins S8 and S17. May interact with IF1 in the 30S initiation complex.

Its function is as follows. With S4 and S5 plays an important role in translational accuracy. Interacts with and stabilizes bases of the 16S rRNA that are involved in tRNA selection in the A site and with the mRNA backbone. Located at the interface of the 30S and 50S subunits, it traverses the body of the 30S subunit contacting proteins on the other side and probably holding the rRNA structure together. The combined cluster of proteins S8, S12 and S17 appears to hold together the shoulder and platform of the 30S subunit. The polypeptide is Small ribosomal subunit protein uS12 (Bifidobacterium adolescentis (strain ATCC 15703 / DSM 20083 / NCTC 11814 / E194a)).